The following is a 272-amino-acid chain: HMP-PP phosphatase (272 aa).

The active-site Nucleophile is Asp-8. The Mg(2+) site is built by Asp-8, Asp-10, and Asp-212.

It belongs to the HAD-like hydrolase superfamily. Cof family. Mg(2+) is required as a cofactor.

The catalysed reaction is 4-amino-2-methyl-5-(diphosphooxymethyl)pyrimidine + H2O = 4-amino-2-methyl-5-(phosphooxymethyl)pyrimidine + phosphate + H(+). Its function is as follows. Catalyzes the hydrolysis of 4-amino-2-methyl-5-hydroxymethylpyrimidine pyrophosphate (HMP-PP) to 4-amino-2-methyl-5-hydroxymethylpyrimidine phosphate (HMP-P). In Klebsiella pneumoniae (strain 342), this protein is HMP-PP phosphatase.